A 361-amino-acid chain; its full sequence is G-protein coupled receptor 52 (361 aa).

Topologically, residues 1 to 44 are extracellular; it reads MNDSRWTEWRILNTSSGILNVSERHSCPLGFGHYSAVDVCIFET. N2, N13, and N20 each carry an N-linked (GlcNAc...) asparagine glycan. Residues 45-65 form a helical membrane-spanning segment; the sequence is IVIVLLTFLIIAGNLTVIFVF. Residues 66–87 lie on the Cytoplasmic side of the membrane; it reads HCAPLLHHYTTSYFIQTMAYAD. Residues 88–108 traverse the membrane as a helical segment; the sequence is LFVGVSCLVPTLSLLHYSTGI. Residues 109-115 are Extracellular-facing; sequence HESLTCQ. C114 and C193 are disulfide-bonded. Residues 116–136 traverse the membrane as a helical segment; sequence VFGYIISVLKSVSMACLACIS. Topologically, residues 137–159 are cytoplasmic; sequence VDRYLAITKPLSYNQLVTPCRLR. A helical membrane pass occupies residues 160–180; it reads ICIILIWIYSCLIFLPSFFGW. Topologically, residues 181-200 are extracellular; that stretch reads GKPGYHGDIFEWCATSWLTS. The helical transmembrane segment at 201-221 threads the bilayer; the sequence is AYFTGFIVCLLYAPAALVVCF. At 222–265 the chain is on the cytoplasmic side; the sequence is TYFHIFKICRQHTKEINDRRARFPSHEAAASRDAGHSPDRRYAM. The helical transmembrane segment at 266–286 threads the bilayer; sequence VLFRITSVFYMLWLPYIIYFL. The Extracellular portion of the chain corresponds to 287 to 296; sequence LESSRVLDNP. Residues 297-317 form a helical membrane-spanning segment; that stretch reads TLSFLTTWLAISNSFCNCVIY. The Cytoplasmic portion of the chain corresponds to 318–361; that stretch reads SLSNSVFRLGLRRLSETMCTSCMCVKDKEARDPKPRKRANSCSI.

The protein belongs to the G-protein coupled receptor 1 family.

It is found in the cell membrane. Its function is as follows. G- protein coupled receptor activated by antipsychotics reserpine leading to an increase in intracellular cAMP and its internalization. May play a role in locomotor activity through modulation of dopamine, NMDA and ADORA2A-induced locomotor activity. These behavioral changes are accompanied by modulation of the dopamine receptor signaling pathway in striatum. Modulates HTT level via cAMP-dependent but PKA independent mechanisms throught activation of RAB39B that translocates HTT to the endoplasmic reticulum, thus avoiding proteasome degradation. The polypeptide is G-protein coupled receptor 52 (Bos taurus (Bovine)).